Reading from the N-terminus, the 872-residue chain is Alanine--tRNA ligase (872 aa).

Residues histidine 567, histidine 571, cysteine 669, and histidine 673 each coordinate Zn(2+).

It belongs to the class-II aminoacyl-tRNA synthetase family. It depends on Zn(2+) as a cofactor.

The protein resides in the cytoplasm. It carries out the reaction tRNA(Ala) + L-alanine + ATP = L-alanyl-tRNA(Ala) + AMP + diphosphate. Its function is as follows. Catalyzes the attachment of alanine to tRNA(Ala) in a two-step reaction: alanine is first activated by ATP to form Ala-AMP and then transferred to the acceptor end of tRNA(Ala). Also edits incorrectly charged Ser-tRNA(Ala) and Gly-tRNA(Ala) via its editing domain. The protein is Alanine--tRNA ligase of Streptococcus agalactiae serotype III (strain NEM316).